Here is a 453-residue protein sequence, read N- to C-terminus: Bifunctional protein GlmU (453 aa).

Positions 1–225 are pyrophosphorylase; the sequence is MNIVILAAGT…EWETLGVNSK (225 aa). UDP-N-acetyl-alpha-D-glucosamine contacts are provided by residues 6-9, Lys20, Gln71, 76-77, 98-100, Gly135, Glu150, Asn165, and Asn223; these read LAAG, GT, and YGD. Asp100 lines the Mg(2+) pocket. Residue Asn223 coordinates Mg(2+). The linker stretch occupies residues 226–246; the sequence is QQLAELERIHQHNVADALLVA. An N-acetyltransferase region spans residues 247–453; sequence GVTLADPARL…GYVRPTKKKS (207 aa). Positions 329 and 347 each coordinate UDP-N-acetyl-alpha-D-glucosamine. His359 (proton acceptor) is an active-site residue. Positions 362 and 373 each coordinate UDP-N-acetyl-alpha-D-glucosamine. Acetyl-CoA contacts are provided by residues Ala376, 382–383, Ser401, and Ala419; that span reads NY.

The protein in the N-terminal section; belongs to the N-acetylglucosamine-1-phosphate uridyltransferase family. It in the C-terminal section; belongs to the transferase hexapeptide repeat family. Homotrimer. The cofactor is Mg(2+).

The protein localises to the cytoplasm. It carries out the reaction alpha-D-glucosamine 1-phosphate + acetyl-CoA = N-acetyl-alpha-D-glucosamine 1-phosphate + CoA + H(+). The enzyme catalyses N-acetyl-alpha-D-glucosamine 1-phosphate + UTP + H(+) = UDP-N-acetyl-alpha-D-glucosamine + diphosphate. Its pathway is nucleotide-sugar biosynthesis; UDP-N-acetyl-alpha-D-glucosamine biosynthesis; N-acetyl-alpha-D-glucosamine 1-phosphate from alpha-D-glucosamine 6-phosphate (route II): step 2/2. The protein operates within nucleotide-sugar biosynthesis; UDP-N-acetyl-alpha-D-glucosamine biosynthesis; UDP-N-acetyl-alpha-D-glucosamine from N-acetyl-alpha-D-glucosamine 1-phosphate: step 1/1. It functions in the pathway bacterial outer membrane biogenesis; LPS lipid A biosynthesis. Its function is as follows. Catalyzes the last two sequential reactions in the de novo biosynthetic pathway for UDP-N-acetylglucosamine (UDP-GlcNAc). The C-terminal domain catalyzes the transfer of acetyl group from acetyl coenzyme A to glucosamine-1-phosphate (GlcN-1-P) to produce N-acetylglucosamine-1-phosphate (GlcNAc-1-P), which is converted into UDP-GlcNAc by the transfer of uridine 5-monophosphate (from uridine 5-triphosphate), a reaction catalyzed by the N-terminal domain. The sequence is that of Bifunctional protein GlmU from Paraburkholderia phytofirmans (strain DSM 17436 / LMG 22146 / PsJN) (Burkholderia phytofirmans).